A 1221-amino-acid polypeptide reads, in one-letter code: DNA-directed RNA polymerase subunit beta (1221 aa).

Residues 1176-1221 (EKKKLAEEEAEIAAEAEAEGSAEGDAAEADADANEAETADDDKASK) are disordered. Positions 1183 to 1215 (EEAEIAAEAEAEGSAEGDAAEADADANEAETAD) are enriched in acidic residues.

It belongs to the RNA polymerase beta chain family. The RNAP catalytic core consists of 2 alpha, 1 beta, 1 beta' and 1 omega subunit. When a sigma factor is associated with the core the holoenzyme is formed, which can initiate transcription.

It carries out the reaction RNA(n) + a ribonucleoside 5'-triphosphate = RNA(n+1) + diphosphate. Functionally, DNA-dependent RNA polymerase catalyzes the transcription of DNA into RNA using the four ribonucleoside triphosphates as substrates. This chain is DNA-directed RNA polymerase subunit beta, found in Lactobacillus delbrueckii subsp. bulgaricus (strain ATCC 11842 / DSM 20081 / BCRC 10696 / JCM 1002 / NBRC 13953 / NCIMB 11778 / NCTC 12712 / WDCM 00102 / Lb 14).